The following is a 68-amino-acid chain: Neuronal regeneration-related protein (68 aa).

The chain is Neuronal regeneration-related protein (NREP) from Gallus gallus (Chicken).